Consider the following 132-residue polypeptide: Small ribosomal subunit protein uS11 (132 aa).

The protein belongs to the universal ribosomal protein uS11 family. In terms of assembly, part of the 30S ribosomal subunit.

Functionally, located on the platform of the 30S subunit. The sequence is that of Small ribosomal subunit protein uS11 from Saccharolobus solfataricus (strain ATCC 35092 / DSM 1617 / JCM 11322 / P2) (Sulfolobus solfataricus).